Here is a 196-residue protein sequence, read N- to C-terminus: MPFVVIITGIPGVGKSTITKLALQRTRAKFKLINFGDLMFEEALKLKLVKHRDEMRKLPLEVQRELQMNAAKKIAEMAKNYPILLDTHATIKTPHGYLLGLPYEVIKILNPNFIVIIEATPSEILGRRLRDLKRDRDVETEEQIQRHQDLNRAAAITYAMHSNALIKIIENHEDKGLEEAVNELVKILDLAVKEYA.

9–17 (GIPGVGKST) lines the ATP pocket.

It belongs to the archaeal adenylate kinase family.

It is found in the cytoplasm. It catalyses the reaction AMP + ATP = 2 ADP. The sequence is that of Adenylate kinase (adkA) from Pyrococcus horikoshii (strain ATCC 700860 / DSM 12428 / JCM 9974 / NBRC 100139 / OT-3).